Reading from the N-terminus, the 1331-residue chain is ABC multidrug transporter MDR2 (1331 aa).

Composition is skewed to basic and acidic residues over residues 1 to 20 and 31 to 41; these read MVEVSEKPNTQDDGVSKQEN and SDKEKVAKKGN. The interval 1–51 is disordered; it reads MVEVSEKPNTQDDGVSKQENRNPASSSSSTSDKEKVAKKGNSDATKSSTPE. 4 consecutive transmembrane segments (helical) span residues 93-113, 147-167, 219-239, and 242-262; these read MIFLAIVSLASIAAGAALPLF, YFVYLGIAQFILLYVSTVGFI, KVGLTLTALSTFFSAFIIGYV, and WKLALICSSTIVAMILVMGGI. In terms of domain architecture, ABC transmembrane type-1 1 spans 97–387; sequence AIVSLASIAA…VAPNTQAFAS (291 aa). A glycan (N-linked (GlcNAc...) asparagine) is linked at asparagine 293. A run of 2 helical transmembrane segments spans residues 325–345 and 358–378; these read LGIMFGSMMAIMYSNYGLGFW and LSAIVNILLAIVIGSFSIGNV. Positions 422 to 667 constitute an ABC transporter 1 domain; that stretch reads IEFRGIKHIY…KGTYLQLVEA (246 aa). 457–464 provides a ligand contact to ATP; it reads GPSGSGKS. Asparagine 529 is a glycosylation site (N-linked (GlcNAc...) asparagine). 2 helical membrane passes run 762–782 and 810–830; these read LCGFFFAVLSGAGQPVQSVFF and FLMLGLVQLVTQSAQGVIFAI. The ABC transmembrane type-1 2 domain maps to 764-1051; the sequence is GFFFAVLSGA…VFSFSPDMGK (288 aa). The N-linked (GlcNAc...) asparagine glycan is linked to asparagine 860. The next 4 helical transmembrane spans lie at 884–904, 910–930, 995–1015, and 1025–1045; these read LGTILMVSTTLIVALTVALAF, LVCISTVPVLLLCGFYRFWIL, ASQSFSFFCLALGFWYGGGLL, and FFLCISCVIFGSQSAGIVFSF. The region spanning 1086 to 1324 is the ABC transporter 2 domain; the sequence is IEFRDVHFRY…KGRYYELVHM (239 aa). An N-linked (GlcNAc...) asparagine glycan is attached at asparagine 1108. ATP is bound at residue 1121 to 1128; it reads GPSGCGKS.

The protein belongs to the ABC transporter superfamily. ABCB family. Multidrug resistance exporter (TC 3.A.1.201) subfamily.

It is found in the cell membrane. It catalyses the reaction itraconazole(in) + ATP + H2O = itraconazole(out) + ADP + phosphate + H(+). Pleiotropic ABC efflux transporter that may be involved in the modulation susceptibility to a wide range of unrelated cytotoxic compounds, including terbinafine, 4-nitroquinoline N-oxide, and ethidium bromide. May play a role in pathogenicity. The chain is ABC multidrug transporter MDR2 from Trichophyton interdigitale (strain MR816).